The primary structure comprises 352 residues: Quinolinate synthase (352 aa).

Iminosuccinate is bound by residues histidine 48 and serine 69. [4Fe-4S] cluster is bound at residue cysteine 114. Residues 140–142 (YAN) and serine 157 each bind iminosuccinate. Cysteine 201 contacts [4Fe-4S] cluster. Iminosuccinate is bound by residues 227-229 (HPE) and threonine 244. Residue cysteine 298 participates in [4Fe-4S] cluster binding.

Belongs to the quinolinate synthase family. Type 1 subfamily. [4Fe-4S] cluster is required as a cofactor.

It localises to the cytoplasm. It carries out the reaction iminosuccinate + dihydroxyacetone phosphate = quinolinate + phosphate + 2 H2O + H(+). It functions in the pathway cofactor biosynthesis; NAD(+) biosynthesis; quinolinate from iminoaspartate: step 1/1. Functionally, catalyzes the condensation of iminoaspartate with dihydroxyacetone phosphate to form quinolinate. The polypeptide is Quinolinate synthase (Pseudomonas putida (strain GB-1)).